A 1363-amino-acid polypeptide reads, in one-letter code: Spike glycoprotein (1363 aa).

Residues 1-13 (MFLILLISLPMAL) form the signal peptide. The Extracellular portion of the chain corresponds to 14 to 1307 (AVIGDLKCTT…GTYEYYVKWP (1294 aa)). Residues 15 to 298 (VIGDLKCTTV…DFMSEIKCKT (284 aa)) form the BetaCoV S1-NTD domain. 5 disulfide bridges follow: C21/C165, C160/C193, C172/C252, C286/C296, and C331/C356. N-linked (GlcNAc...) asparagine; by host glycosylation is found at N59 and N133. N198 carries an N-linked (GlcNAc...) asparagine; by host glycan. The 289-residue stretch at 329-617 (PDCNIEAWLN…DVNSGTTCST (289 aa)) folds into the BetaCoV S1-CTD domain. The N-linked (GlcNAc...) asparagine; by host glycan is linked to N359. 2 disulfides stabilise this stretch: C374-C427 and C386-C615. N-linked (GlcNAc...) asparagine; by host glycosylation is found at N437, N649, N676, N696, N714, N739, and N788. Fusion peptide regions lie at residues 914–935 (SAIE…VEAY) and 933–953 (EAYN…VQSY). N-linked (GlcNAc...) asparagine; by host glycosylation is present at N937. A disulfide bridge connects residues C938 and C949. Residues 1014–1064 (QKLIANAFNNALDAIQEGFDATNSALVKIQAVVNANAEALNNLLQQLSNRF) form a heptad repeat 1 region. Residues 1043 to 1087 (QAVVNANAEALNNLLQQLSNRFGAISSSLQEILSRLDALEAQAQI) are a coiled coil. 6 N-linked (GlcNAc...) asparagine; by host glycosylation sites follow: N1194, N1224, N1234, N1253, N1267, and N1288. The interval 1258–1296 (APDLSLDYINVTFLDLQDEMNRLQEAIKVLNQSYINLKD) is heptad repeat 2. Residues 1269–1297 (TFLDLQDEMNRLQEAIKVLNQSYINLKDI) are a coiled coil. Residues 1308 to 1328 (WYVWLLIGLAGVAMLVLLFFI) form a helical membrane-spanning segment. The Cytoplasmic portion of the chain corresponds to 1329-1363 (CCCTGCGTSCFKKCGGCCDDYTGHQELVIKTSHDD). The short motif at 1359-1363 (TSHDD) is the KxHxx element.

Belongs to the betacoronaviruses spike protein family. Homotrimer; each monomer consists of a S1 and a S2 subunit. The resulting peplomers protrude from the virus surface as spikes. Post-translationally, specific enzymatic cleavages in vivo yield mature proteins. The precursor is processed into S1 and S2 by host cell furin or another cellular protease to yield the mature S1 and S2 proteins. Additionally, a second cleavage leads to the release of a fusion peptide after viral attachment to host cell receptor. The cytoplasmic Cys-rich domain is palmitoylated. Spike glycoprotein is digested within host endosomes.

Its subcellular location is the virion membrane. It is found in the host endoplasmic reticulum-Golgi intermediate compartment membrane. The protein localises to the host cell membrane. Attaches the virion to the cell membrane by interacting with host receptor, initiating the infection. Functionally, mediates fusion of the virion and cellular membranes by acting as a class I viral fusion protein. Under the current model, the protein has at least three conformational states: pre-fusion native state, pre-hairpin intermediate state, and post-fusion hairpin state. During viral and target cell membrane fusion, the coiled coil regions (heptad repeats) assume a trimer-of-hairpins structure, positioning the fusion peptide in close proximity to the C-terminal region of the ectodomain. The formation of this structure appears to drive apposition and subsequent fusion of viral and target cell membranes. In terms of biological role, acts as a viral fusion peptide which is unmasked following S2 cleavage occurring upon virus endocytosis. The polypeptide is Spike glycoprotein (Bos taurus (Bovine)).